A 205-amino-acid chain; its full sequence is Adenylyl-sulfate kinase (205 aa).

An ATP-binding site is contributed by 31-38; that stretch reads GLSGAGKS. Ser105 serves as the catalytic Phosphoserine intermediate.

This sequence belongs to the APS kinase family.

The enzyme catalyses adenosine 5'-phosphosulfate + ATP = 3'-phosphoadenylyl sulfate + ADP + H(+). Its pathway is sulfur metabolism; hydrogen sulfide biosynthesis; sulfite from sulfate: step 2/3. In terms of biological role, catalyzes the synthesis of activated sulfate. This is Adenylyl-sulfate kinase from Shewanella sp. (strain ANA-3).